Reading from the N-terminus, the 1123-residue chain is MTSSGKVRIYELSKDLGLDNKDVLDAAEKLSIAAKSHSSSISETEAGKIRSLLKAGSAPRAAASPSKPAPGKAILSVQKAGSGSNSPARPEQPKPAASSPPAAPAAPTKAKSPQQPPARPAAPSRPAAPKASATQTSAPQKPVVRQQPTAQQPVPRPKPKTAPERTVSRPPSPPARPVPQQPSPPSAKPRGTAPIRRAAPNDAPRPANAPPSRPQPKTPVNRTAPPPQRPAAKPELVGRPQPRRPEGPPTRQGAGPGSPRPAVSPRPSAPGSQRNMPQRPAGAQRPGAPTRPGTGAGRPSRPGGNTLELVGKPIRRDGSGNRGEGGRPPGGARPAGGGNRPAMPPGMRKPVAPGELMQLQKPSGRPGVPPPRRPDGTPVTPRGDGPKATPPVSRPTATPPSPATAPRRPGGFRPGAGPGGQRRPGRPDWDDSAKLDALRNRSPQKQRQKVHIIGENDDSLAAQTGGFAGEQQNMVLSASLARPSKPKSQQKAAPKPVAAMRKRRKETTRQRQRRRAMELRAAREAKQVRPEMIVVPEDNLTVQELADMLSVESSEIIKSLFFKGIIATVTQSLDMPTIETVAEEFGVPVLQDDVEEAAKKTVEMIEEQDLEHLIRRPPVVTVMGHVDHGKTSLLDAIRKARVAAGEAGGITQHIGAYQVEIEHSGEPRRLTFLDTPGHEAFTAMRARGTKVTDVAVLVVAADDGVRPQTLEAISHARAAEVPIVVAINKIDKEGASPDRVKQELSEQNLLAEEWGGDVVMVPVSAIKSENIDKLLEMLLLVTEVEDLQANPDRLARGTVIEAHLDKAKGPVATLLVQNGTLRTGDVVAAGPVLGKVRAMVDDASVRLKEAGPSCAVEALGFSEVPTAGDEFEVYPDEKSARAVVGDRASDARATRLAQQMASRRVSLTAMSGQANDGDLKELNLILKADVQGSVEAILGSLEQLPKDEVQVRVLLSAPGEITETDVDLAAASGAVIVGFNTSMASGARKAADANGVDVRDYDVIYKLLEDIQLAMEGLLEPELVEEALGEAEVRAVFTIGKSAVAGCYVTTGKLQRNCKVRVHRGKEIVYAGDLDSLRRNKDDVKEVATGFECGVGTDRFANWQDGDRIEAFKMVTQRRKLTT.

Disordered regions lie at residues 52–452 and 480–512; these read LLKA…KVHI and LARPSKPKSQQKAAPKPVAAMRKRRKETTRQRQ. Composition is skewed to low complexity over residues 54 to 73, 94 to 113, and 121 to 133; these read KAGSAPRAAASPSKPAPGKA, KPAASSPPAAPAAPTKAKSP, and AAPSRPAAPKASA. Positions 170 to 187 are enriched in pro residues; the sequence is PPSPPARPVPQQPSPPSA. The span at 193 to 206 shows a compositional bias: low complexity; it reads APIRRAAPNDAPRP. Pro residues-rich tracts occupy residues 207–217 and 258–268; these read ANAPPSRPQPK and SPRPAVSPRPS. Residues 285-304 are compositionally biased toward low complexity; sequence RPGAPTRPGTGAGRPSRPGG. A compositionally biased stretch (gly residues) spans 320–339; the sequence is GNRGEGGRPPGGARPAGGGN. Positions 388–403 are enriched in pro residues; sequence ATPPVSRPTATPPSPA. Residues 412-422 show a composition bias toward gly residues; it reads FRPGAGPGGQR. Residues 425 to 439 show a composition bias toward basic and acidic residues; it reads GRPDWDDSAKLDALR. Residues 486-499 show a composition bias toward low complexity; sequence PKSQQKAAPKPVAA. The span at 500-512 shows a compositional bias: basic residues; it reads MRKRRKETTRQRQ. The 173-residue stretch at 615-787 folds into the tr-type G domain; the sequence is RRPPVVTVMG…LLLVTEVEDL (173 aa). The G1 stretch occupies residues 624–631; that stretch reads GHVDHGKT. 624–631 contacts GTP; it reads GHVDHGKT. Positions 649-653 are G2; that stretch reads GITQH. The G3 stretch occupies residues 674–677; it reads DTPG. Residues 674–678 and 728–731 contribute to the GTP site; these read DTPGH and NKID. The tract at residues 728–731 is G4; that stretch reads NKID. The segment at 764–766 is G5; it reads SAI.

The protein belongs to the TRAFAC class translation factor GTPase superfamily. Classic translation factor GTPase family. IF-2 subfamily.

It is found in the cytoplasm. Its function is as follows. One of the essential components for the initiation of protein synthesis. Protects formylmethionyl-tRNA from spontaneous hydrolysis and promotes its binding to the 30S ribosomal subunits. Also involved in the hydrolysis of GTP during the formation of the 70S ribosomal complex. The protein is Translation initiation factor IF-2 of Synechococcus sp. (strain WH7803).